A 1237-amino-acid chain; its full sequence is U3 small nucleolar RNA-associated protein 22 (1237 aa).

Positions methionine 1–glycine 78 are disordered. Residues serine 10 and serine 58 each carry the phosphoserine modification. Threonine 60 bears the Phosphothreonine mark. Polar residues predominate over residues serine 61–glycine 78. Serine 64 is modified (phosphoserine).

This sequence belongs to the NRAP family. In terms of assembly, interacts with snoRNA U3. Interacts with MPP10. Component of the ribosomal small subunit (SSU) processome composed of at least 40 protein subunits and snoRNA U3. Interacts with UBP10.

The protein localises to the nucleus. It is found in the nucleolus. Its function is as follows. Involved in nucleolar processing of pre-18S ribosomal RNA and ribosome assembly. The protein is U3 small nucleolar RNA-associated protein 22 (UTP22) of Saccharomyces cerevisiae (strain ATCC 204508 / S288c) (Baker's yeast).